The sequence spans 190 residues: Biphenyl-2,3-diol 1,2-dioxygenase 3 (190 aa).

The region spanning 6–125 (RLAHFVLQTN…DGNMVELQID (120 aa)) is the VOC domain. Histidine 9, histidine 73, and glutamate 121 together coordinate Fe cation.

The protein belongs to the extradiol ring-cleavage dioxygenase family. As to quaternary structure, homohexamer. It depends on Fe(2+) as a cofactor.

The catalysed reaction is biphenyl-2,3-diol + O2 = 2-hydroxy-6-oxo-6-phenylhexa-2,4-dienoate + H(+). The protein operates within xenobiotic degradation; biphenyl degradation; 2-hydroxy-2,4-pentadienoate and benzoate from biphenyl: step 3/4. The chain is Biphenyl-2,3-diol 1,2-dioxygenase 3 (bphC3) from Rhodococcus globerulus.